A 405-amino-acid chain; its full sequence is Argininosuccinate synthase (405 aa).

11–19 (AYSGGLDTS) lines the ATP pocket. Residue tyrosine 90 participates in L-citrulline binding. Glycine 119 contacts ATP. L-aspartate contacts are provided by threonine 121, asparagine 125, and aspartate 126. Asparagine 125 contributes to the L-citrulline binding site. 5 residues coordinate L-citrulline: arginine 129, serine 178, serine 187, glutamate 263, and tyrosine 275.

It belongs to the argininosuccinate synthase family. Type 1 subfamily. Homotetramer.

It localises to the cytoplasm. It catalyses the reaction L-citrulline + L-aspartate + ATP = 2-(N(omega)-L-arginino)succinate + AMP + diphosphate + H(+). Its pathway is amino-acid biosynthesis; L-arginine biosynthesis; L-arginine from L-ornithine and carbamoyl phosphate: step 2/3. The protein is Argininosuccinate synthase of Legionella pneumophila subsp. pneumophila (strain Philadelphia 1 / ATCC 33152 / DSM 7513).